A 358-amino-acid chain; its full sequence is tRNA N6-adenosine threonylcarbamoyltransferase (358 aa).

Positions 122 and 126 each coordinate Fe cation. Substrate is bound by residues 145-149 (LVSGG), aspartate 178, glycine 191, and asparagine 287. Aspartate 315 is a Fe cation binding site.

The protein belongs to the KAE1 / TsaD family. Fe(2+) is required as a cofactor.

It localises to the cytoplasm. The enzyme catalyses L-threonylcarbamoyladenylate + adenosine(37) in tRNA = N(6)-L-threonylcarbamoyladenosine(37) in tRNA + AMP + H(+). Its function is as follows. Required for the formation of a threonylcarbamoyl group on adenosine at position 37 (t(6)A37) in tRNAs that read codons beginning with adenine. Is involved in the transfer of the threonylcarbamoyl moiety of threonylcarbamoyl-AMP (TC-AMP) to the N6 group of A37, together with TsaE and TsaB. TsaD likely plays a direct catalytic role in this reaction. The sequence is that of tRNA N6-adenosine threonylcarbamoyltransferase from Hydrogenovibrio crunogenus (strain DSM 25203 / XCL-2) (Thiomicrospira crunogena).